A 227-amino-acid polypeptide reads, in one-letter code: Lipoprotein-releasing system ATP-binding protein LolD (227 aa).

Residues 6-227 (LVLDDIQKSY…RLDEGVLVSA (222 aa)) form the ABC transporter domain. Position 43-50 (43-50 (APSGAGKS)) interacts with ATP.

The protein belongs to the ABC transporter superfamily. Lipoprotein translocase (TC 3.A.1.125) family. The complex is composed of two ATP-binding proteins (LolD) and two transmembrane proteins (LolC and LolE).

Its subcellular location is the cell inner membrane. In terms of biological role, part of the ABC transporter complex LolCDE involved in the translocation of mature outer membrane-directed lipoproteins, from the inner membrane to the periplasmic chaperone, LolA. Responsible for the formation of the LolA-lipoprotein complex in an ATP-dependent manner. This Jannaschia sp. (strain CCS1) protein is Lipoprotein-releasing system ATP-binding protein LolD.